The primary structure comprises 281 residues: Diaminopimelate epimerase (281 aa).

Substrate-binding residues include N13, Q46, and N66. The active-site Proton donor is C75. Substrate is bound by residues 76-77, N160, N193, and 211-212; these read GN and ER. Catalysis depends on C220, which acts as the Proton acceptor. 221–222 provides a ligand contact to substrate; sequence GT.

This sequence belongs to the diaminopimelate epimerase family. In terms of assembly, homodimer.

Its subcellular location is the cytoplasm. The enzyme catalyses (2S,6S)-2,6-diaminopimelate = meso-2,6-diaminopimelate. It participates in amino-acid biosynthesis; L-lysine biosynthesis via DAP pathway; DL-2,6-diaminopimelate from LL-2,6-diaminopimelate: step 1/1. Its function is as follows. Catalyzes the stereoinversion of LL-2,6-diaminopimelate (L,L-DAP) to meso-diaminopimelate (meso-DAP), a precursor of L-lysine and an essential component of the bacterial peptidoglycan. This Acinetobacter baumannii (strain AB307-0294) protein is Diaminopimelate epimerase.